The chain runs to 97 residues: UPF0223 protein lp_2149 (97 aa).

The protein belongs to the UPF0223 family.

This Lactiplantibacillus plantarum (strain ATCC BAA-793 / NCIMB 8826 / WCFS1) (Lactobacillus plantarum) protein is UPF0223 protein lp_2149.